The primary structure comprises 353 residues: ATP-dependent kinase YFH7 (353 aa).

G31–T39 is a binding site for ATP.

This sequence belongs to the YFH7 family.

Its function is as follows. ATP-dependent kinase that could be involved in endoplasmic reticulum membrane assembly. The chain is ATP-dependent kinase YFH7 (YFH7) from Saccharomyces cerevisiae (strain Lalvin EC1118 / Prise de mousse) (Baker's yeast).